A 245-amino-acid polypeptide reads, in one-letter code: Transmembrane and ubiquitin-like domain-containing protein 1 (245 aa).

Residues Ala2 to Ser30 form a required to release iHOPS from membranes region. Residues Val11 to Thr31 traverse the membrane as a helical segment. Residues Thr34 to Gln51 are compositionally biased toward polar residues. A disordered region spans residues Thr34–Glu100. Residues Ser73, Ser97, and Ser126 each carry the phosphoserine modification. One can recognise a Ubiquitin-like domain in the interval Leu102–Gly175. Helical transmembrane passes span Ile194 to Ile214 and Phe219 to Ala239.

Interacts with EEF1A1, GRIA2, GRIP1. Interacts with CAMLG, TUBG1. Interacts with NPM1 and CDKN2A; TMUB1 can enhance interaction between NPM1 and CDKN2A and is proposed to bridge the proteins; proposed to be mediated by iHOPS. Interacts with ERLIN2 and AMFR; TMUB1 promotes the interaction of ERLIN2 with AMFR. Post-translationally, processed by regulated intramembrane proteolysis (RIP) in the N-terminus to release iHOPS from membranes.

It is found in the membrane. Its subcellular location is the postsynaptic cell membrane. The protein resides in the recycling endosome. The protein localises to the cytoplasm. It localises to the cytoskeleton. It is found in the microtubule organizing center. Its subcellular location is the centrosome. The protein resides in the nucleus. The protein localises to the nucleolus. Involved in sterol-regulated ubiquitination and degradation of HMG-CoA reductase HMGCR. Involved in positive regulation of AMPA-selective glutamate receptor GRIA2 recycling to the cell surface. Acts as a negative regulator of hepatocyte growth during regeneration. Functionally, may contribute to the regulation of translation during cell-cycle progression. May contribute to the regulation of cell proliferation. May be involved in centrosome assembly. Modulates stabilization and nucleolar localization of tumor suppressor CDKN2A and enhances association between CDKN2A and NPM1. In Rattus norvegicus (Rat), this protein is Transmembrane and ubiquitin-like domain-containing protein 1 (Tmub1).